A 309-amino-acid chain; its full sequence is MDRPQWPGGLIAQVHGFVFSWWGVILLLAIINLKSFPGIWTIRALYHMKSSFNGQLRQTVASPTAENAQRRVPKTPKTGATDTIDHHPLFQPEIISSHVSPAEIDFNMHKSNSTYFTDLDISRIKLVGRIMAPAWPLDRMHVEYKGRDGEMKRERVKGRPALALGATCTSFKREMKVLARYDVESRILGWDSRWLYIGSWFVSRKGGKGKEQLFASSLSKYIVKKGRITVRPEQFLTESGWIPPRPESTGNSKSLDSLQANGHGATENGKHDAKDTWTWEEIESHRLKGMTTVGGWADADLRLEQAYSS.

A helical membrane pass occupies residues 11–31 (IAQVHGFVFSWWGVILLLAII). The tract at residues 61 to 83 (ASPTAENAQRRVPKTPKTGATDT) is disordered. N112 carries an N-linked (GlcNAc...) asparagine glycan. The disordered stretch occupies residues 239–275 (SGWIPPRPESTGNSKSLDSLQANGHGATENGKHDAKD). Residues 248–260 (STGNSKSLDSLQA) are compositionally biased toward polar residues.

Belongs to the lcsJ thioesterase family.

The protein resides in the membrane. The protein operates within secondary metabolite biosynthesis. Thioesterase; part of the gene cluster that mediates the biosynthesis of the lipopeptide antibiotics leucinostatins that show extensive biological activities, including antimalarial, antiviral, antibacterial, antifungal, and antitumor activities, as well as phytotoxic. Leucinostatin A contains nine amino acid residues, including the unusual amino acid 4-methyl-L-proline (MePro), 2-amino-6-hydroxy-4-methyl-8-oxodecanoic acid (AHyMeOA), 3-hydroxyleucine (HyLeu), alpha-aminoisobutyric acid (AIB), beta-Ala, a 4-methylhex-2-enoic acid at the N-terminus as well as a N1,N1-dimethylpropane-1,2-diamine (DPD) at the C-terminus. The biosynthesis of leucinostatins is probably initiated with the assembly of 4-methylhex-2-enoic acid by a reducing PKS. Two reducing polyketide synthases, lcsB and lcsC, have been identified in the cluster and it is not clear which is the one that assembles 4-methylhex-2-enoic acid since both contain KS, AT, DH, cMT, ER, KR and ACP domains. The polyketide residue might be transferred to the NRPS lcsA, mediated by two additional enzymes, the acyl-CoA ligase lcsD and the thioesterase lcsE. The linear polyketide carboxylic acid, which is released from PKS, is converted to a CoA thioester by lcsD, and then lcsE hydrolyzes the thiol bond and shuttles the polyketide intermediate to lcsA. The C domain of the first module catalyzed the condensation of 4-methylhex-2-enoic acid and MePro carried by domain A1, followed by successive condensations of nine amino acids to trigger the elongation of the linear peptide. A5 and A6 domains of lcsA are proposed to incorporate leucine, A2 AHyMeOA, and A3 incorporates HyLeu. A4, A7 and A8 incorporate AIB. The AHyMeOA in leucinostatin A activated by the A2 might be produced by the second PKS (lcsB or lcsC) present within the cluster. The MePro is probably produced via leucine cyclization and may originate from a separate pathway, independent of the cluster. Another nonproteinogenic amino acid, beta-Ala, could be produced by an aspartic acid decarboxylase also localized outside of the cluster. Two candidates are VFPBJ_01400 and VFPBJ_10476. The final peptide scaffold may be released by the NAD(P)H-dependent thioester reductase (TE) at the C-terminal region of lcsA. Transamination of the lcsA product by the transaminase lcsP may produce DPD at the C-terminus. Further hydroxylation steps performed alternatively by the cytochrome P450 monooxygenases lcsI, lcsK and lcsN then yield the non-methylated leucinostatins precursor. It is also possible that leucines can be hydroxylated prior to their incorporation into the peptide. Varying extents of methylation then lead to the formation of leucinostatins A and B. The polypeptide is Thioesterase lcsJ (Purpureocillium lilacinum (Paecilomyces lilacinus)).